Reading from the N-terminus, the 515-residue chain is 2-isopropylmalate synthase (515 aa).

The 263-residue stretch at 4–266 (IKFFDTTLRD…ETRLNLQEIK (263 aa)) folds into the Pyruvate carboxyltransferase domain. The Mn(2+) site is built by D13, H201, H203, and N237. Residues 391-515 (QLSSIQVQYG…RAENEKVTTP (125 aa)) are regulatory domain.

Belongs to the alpha-IPM synthase/homocitrate synthase family. LeuA type 1 subfamily. Homodimer. The cofactor is Mn(2+).

Its subcellular location is the cytoplasm. The enzyme catalyses 3-methyl-2-oxobutanoate + acetyl-CoA + H2O = (2S)-2-isopropylmalate + CoA + H(+). The protein operates within amino-acid biosynthesis; L-leucine biosynthesis; L-leucine from 3-methyl-2-oxobutanoate: step 1/4. Its function is as follows. Catalyzes the condensation of the acetyl group of acetyl-CoA with 3-methyl-2-oxobutanoate (2-ketoisovalerate) to form 3-carboxy-3-hydroxy-4-methylpentanoate (2-isopropylmalate). In Geobacillus thermodenitrificans (strain NG80-2), this protein is 2-isopropylmalate synthase.